Consider the following 628-residue polypeptide: Biosynthetic arginine decarboxylase (628 aa).

Lysine 101 is modified (N6-(pyridoxal phosphate)lysine). 281 to 291 (VDVGGGLGVDY) contacts substrate.

Belongs to the Orn/Lys/Arg decarboxylase class-II family. SpeA subfamily. It depends on Mg(2+) as a cofactor. Requires pyridoxal 5'-phosphate as cofactor.

It catalyses the reaction L-arginine + H(+) = agmatine + CO2. It participates in amine and polyamine biosynthesis; agmatine biosynthesis; agmatine from L-arginine: step 1/1. In terms of biological role, catalyzes the biosynthesis of agmatine from arginine. This Alkalilimnicola ehrlichii (strain ATCC BAA-1101 / DSM 17681 / MLHE-1) protein is Biosynthetic arginine decarboxylase.